The following is a 154-amino-acid chain: Myoglobin (154 aa).

The region spanning glycine 2 to lysine 148 is the Globin domain. At serine 4 the chain carries Phosphoserine. Histidine 65 serves as a coordination point for nitrite. Residue histidine 65 participates in O2 binding. Residue threonine 68 is modified to Phosphothreonine. Position 94 (histidine 94) interacts with heme b.

It belongs to the globin family. Monomeric.

The protein localises to the cytoplasm. Its subcellular location is the sarcoplasm. The enzyme catalyses Fe(III)-heme b-[protein] + nitric oxide + H2O = Fe(II)-heme b-[protein] + nitrite + 2 H(+). The catalysed reaction is H2O2 + AH2 = A + 2 H2O. Monomeric heme protein which primary function is to store oxygen and facilitate its diffusion within muscle tissues. Reversibly binds oxygen through a pentacoordinated heme iron and enables its timely and efficient release as needed during periods of heightened demand. Depending on the oxidative conditions of tissues and cells, and in addition to its ability to bind oxygen, it also has a nitrite reductase activity whereby it regulates the production of bioactive nitric oxide. Under stress conditions, like hypoxia and anoxia, it also protects cells against reactive oxygen species thanks to its pseudoperoxidase activity. The protein is Myoglobin (MB) of Cervus elaphus (Red deer).